We begin with the raw amino-acid sequence, 60 residues long: Potassium channel toxin MeuTXKalpha3 (60 aa).

A signal peptide spans 1–22; it reads MKNYCGIITLFLAIISATGVFC. Disulfide bonds link Cys-32/Cys-50, Cys-37/Cys-55, and Cys-41/Cys-57. Pro-59 is modified (proline amide).

The protein belongs to the short scorpion toxin superfamily. Potassium channel inhibitor family. In terms of tissue distribution, expressed by the venom gland.

The protein resides in the secreted. Functionally, may block voltage-gated potassium channels (Kv). The protein is Potassium channel toxin MeuTXKalpha3 of Mesobuthus eupeus (Lesser Asian scorpion).